Reading from the N-terminus, the 526-residue chain is MSFLQEVGKRRTFAIISHPDAGKTTITEKVLLFGNAIQKAGTVKGRGSNQHAKSDWMEMEKERGISVTTSVMQFPFNDCLVNLLDTPGHEDFSEDTYRTLTAVDSCLMVIDAAKGVEDRTRKLMEVTRLRDTPIVTFMNKLDREVRDPMEVLDEVESELGMACAPISWPIGCGKEFKGVYHIHRDETILYESGHGHEIQEVRTIKGLDNPELDATVGADLAESVREELELVMGACPEFDHELFLAGELTPVYFGTALGNFGVDHMLEGLTDWAPAPQTRQANERDVVATEDKFSGFVFKIQANMDPKHRDRIAFMRIVSGTYTQGMKMNHVRTGKNVSISDAVTFMAGDRSRAETAYAGDIIGLHNHGTIQIGDTFTQGESLKFSGIPNFAPELFRRIRLKDPLKQKQLLKGLVQLSEEGAVQVFRPLQNNDLIVGAVGVLQFDVVVARLKAEYNVEAIYEGVSVATARWVDCADGKKMDEFQRKNQANLALDGGDNLTYIAPTMVNLNLASERFPDVQFRATREH.

Residues 8–277 (GKRRTFAIIS…GLTDWAPAPQ (270 aa)) form the tr-type G domain. Residues 17 to 24 (SHPDAGKT), 85 to 89 (DTPGH), and 139 to 142 (NKLD) each bind GTP.

It belongs to the TRAFAC class translation factor GTPase superfamily. Classic translation factor GTPase family. PrfC subfamily.

It is found in the cytoplasm. Its function is as follows. Increases the formation of ribosomal termination complexes and stimulates activities of RF-1 and RF-2. It binds guanine nucleotides and has strong preference for UGA stop codons. It may interact directly with the ribosome. The stimulation of RF-1 and RF-2 is significantly reduced by GTP and GDP, but not by GMP. In Aliivibrio fischeri (strain ATCC 700601 / ES114) (Vibrio fischeri), this protein is Peptide chain release factor 3.